An 86-amino-acid chain; its full sequence is Large ribosomal subunit protein bL27 (86 aa).

Positions 1–21 are disordered; it reads MAHKKAAGSSRNGRDSESKRL.

Belongs to the bacterial ribosomal protein bL27 family.

The sequence is that of Large ribosomal subunit protein bL27 from Hahella chejuensis (strain KCTC 2396).